A 463-amino-acid polypeptide reads, in one-letter code: Chromosomal replication initiator protein DnaA (463 aa).

Residues 1 to 83 (MSTNQIILTD…LQLFQHYNNT (83 aa)) are domain I, interacts with DnaA modulators. The domain II stretch occupies residues 83–124 (TIKSIEIITKELPGTTQTVIELPTKTFADIGSSELNSENIFS). A domain III, AAA+ region region spans residues 125-343 (TLDVRFTFDN…GALNKVIAHS (219 aa)). Residues G171, G173, K174, and T175 each coordinate ATP. Residues 344–463 (NFTLKEITLE…INLLMKILQN (120 aa)) are domain IV, binds dsDNA.

This sequence belongs to the DnaA family. In terms of assembly, oligomerizes as a right-handed, spiral filament on DNA at oriC.

It localises to the cytoplasm. Functionally, plays an essential role in the initiation and regulation of chromosomal replication. ATP-DnaA binds to the origin of replication (oriC) to initiate formation of the DNA replication initiation complex once per cell cycle. Binds the DnaA box (a 9 base pair repeat at the origin) and separates the double-stranded (ds)DNA. Forms a right-handed helical filament on oriC DNA; dsDNA binds to the exterior of the filament while single-stranded (ss)DNA is stabiized in the filament's interior. The ATP-DnaA-oriC complex binds and stabilizes one strand of the AT-rich DNA unwinding element (DUE), permitting loading of DNA polymerase. After initiation quickly degrades to an ADP-DnaA complex that is not apt for DNA replication. Binds acidic phospholipids. The chain is Chromosomal replication initiator protein DnaA from Rickettsia felis (strain ATCC VR-1525 / URRWXCal2) (Rickettsia azadi).